We begin with the raw amino-acid sequence, 242 residues long: 3-oxoacyl-[acyl-carrier-protein] reductase FabG (242 aa).

Residues 10–13, Thr-35, 57–58, and Asn-84 contribute to the NADP(+) site; these read GSTR and NV. Residue Ser-136 coordinates substrate. Tyr-149 serves as the catalytic Proton acceptor. NADP(+) contacts are provided by residues 149-153 and Ile-182; that span reads YCAAK.

It belongs to the short-chain dehydrogenases/reductases (SDR) family. As to quaternary structure, homotetramer.

It catalyses the reaction a (3R)-hydroxyacyl-[ACP] + NADP(+) = a 3-oxoacyl-[ACP] + NADPH + H(+). Its pathway is lipid metabolism; fatty acid biosynthesis. Catalyzes the NADPH-dependent reduction of beta-ketoacyl-ACP substrates to beta-hydroxyacyl-ACP products, the first reductive step in the elongation cycle of fatty acid biosynthesis. The chain is 3-oxoacyl-[acyl-carrier-protein] reductase FabG (fabG) from Haemophilus influenzae (strain ATCC 51907 / DSM 11121 / KW20 / Rd).